The chain runs to 317 residues: Transaldolase (317 aa).

Residue lysine 126 is the Schiff-base intermediate with substrate of the active site.

This sequence belongs to the transaldolase family. Type 1 subfamily. As to quaternary structure, homodimer.

It localises to the cytoplasm. The enzyme catalyses D-sedoheptulose 7-phosphate + D-glyceraldehyde 3-phosphate = D-erythrose 4-phosphate + beta-D-fructose 6-phosphate. The protein operates within carbohydrate degradation; pentose phosphate pathway; D-glyceraldehyde 3-phosphate and beta-D-fructose 6-phosphate from D-ribose 5-phosphate and D-xylulose 5-phosphate (non-oxidative stage): step 2/3. In terms of biological role, transaldolase is important for the balance of metabolites in the pentose-phosphate pathway. The polypeptide is Transaldolase (Burkholderia pseudomallei (strain K96243)).